Here is a 290-residue protein sequence, read N- to C-terminus: MTFQELILALDKFWSDRGCVIQQPYDLEVGAGTFNPATFLRVIGPEPYHVAYVEPSRRPTDGRYGENPNRLQHYYQYQVILKPSPPDSQGVYLESLRSFGIDPLEHDIRFVEDDWESPTLGASGLGWEVWLDGMEITQFTYFQQVGGIALSPVSLELTYGLERIAMYLQGVNSVYDLIWSGNVTYGDVHHRGEVEWSHYNFQQADVDMLLQLFNMYEAESHRMNEKGLVLPSYDYCLKCSHVFNLLDARGAISVTERTNYIARVRGMARQVAHAYAAQREAMGYPLLNKW.

It belongs to the class-II aminoacyl-tRNA synthetase family. In terms of assembly, tetramer of two alpha and two beta subunits.

Its subcellular location is the cytoplasm. It carries out the reaction tRNA(Gly) + glycine + ATP = glycyl-tRNA(Gly) + AMP + diphosphate. This chain is Glycine--tRNA ligase alpha subunit, found in Syntrophobacter fumaroxidans (strain DSM 10017 / MPOB).